The chain runs to 671 residues: NADPH--cytochrome P450 reductase (671 aa).

Residues 1–14 (MSAEHVEEVVSEEP) lie on the Lumenal side of the membrane. Residues 15–35 (FLGTLDIALLVVLLVGATWYF) form a helical membrane-spanning segment. Over 36-671 (MRSRKKEEAP…QKRYSADVWS (636 aa)) the chain is Cytoplasmic. Positions 77–221 (LVVFYGSQTG…DFITWKDRFW (145 aa)) constitute a Flavodoxin-like domain. FMN contacts are provided by residues 83-88 (SQTGTA), 135-138 (ATYG), 170-179 (LGNKTYEHYN), and Asp-205. The FAD-binding FR-type domain occupies 276–515 (KNPFLASVIV…FIRKSQFRLP (240 aa)). An NADP(+)-binding site is contributed by Arg-295. FAD contacts are provided by residues 451–454 (RYYS), 469–471 (TAV), Tyr-475, and 485–488 (GVAT). NADP(+)-binding positions include Thr-529, 589-590 (SR), 595-599 (KIYVT), and Asp-632. Position 670 (Trp-670) interacts with FAD.

This sequence belongs to the NADPH--cytochrome P450 reductase family. It in the N-terminal section; belongs to the flavodoxin family. In the C-terminal section; belongs to the flavoprotein pyridine nucleotide cytochrome reductase family. It depends on FAD as a cofactor. FMN is required as a cofactor.

It is found in the endoplasmic reticulum membrane. The catalysed reaction is 2 oxidized [cytochrome P450] + NADPH = 2 reduced [cytochrome P450] + NADP(+) + H(+). This enzyme is required for electron transfer from NADP to cytochrome P450 in microsomes. It can also provide electron transfer to heme oxygenase and cytochrome B5. The sequence is that of NADPH--cytochrome P450 reductase from Musca domestica (House fly).